The sequence spans 95 residues: MEIRLINIGFGNIVSANRIVAIVSPESAPIKRMITEARDRGMLIDATYGRRTRAVIITDSDHVILSAVQPETVAHRLVSKMEQAHHHHHGDNGKD.

This sequence belongs to the RemA family.

This Desulforudis audaxviator (strain MP104C) protein is Putative regulatory protein Daud_1598.